A 66-amino-acid chain; its full sequence is uncharacterized protein (66 aa).

Residues 1 to 20 (MIALAYLATVAIAAMVLAVA) are hydrophobic.

This is an uncharacterized protein from Streptomyces lividans.